The primary structure comprises 213 residues: Glycerol-3-phosphate acyltransferase (213 aa).

A run of 5 helical transmembrane segments spans residues 3 to 23, 51 to 71, 78 to 98, 115 to 135, and 140 to 160; these read ILLA…VVVS, KAAI…VWLA, DVAI…PVFF, AVHP…AFFF, and LAAL…FGMP.

Belongs to the PlsY family. In terms of assembly, probably interacts with PlsX.

It is found in the cell inner membrane. It carries out the reaction an acyl phosphate + sn-glycerol 3-phosphate = a 1-acyl-sn-glycero-3-phosphate + phosphate. It functions in the pathway lipid metabolism; phospholipid metabolism. In terms of biological role, catalyzes the transfer of an acyl group from acyl-phosphate (acyl-PO(4)) to glycerol-3-phosphate (G3P) to form lysophosphatidic acid (LPA). This enzyme utilizes acyl-phosphate as fatty acyl donor, but not acyl-CoA or acyl-ACP. This is Glycerol-3-phosphate acyltransferase from Burkholderia cenocepacia (strain HI2424).